Here is a 131-residue protein sequence, read N- to C-terminus: Methylglyoxal synthase (131 aa).

The MGS-like domain occupies 1–131; the sequence is MKIALIAHDK…GDLDYRKFRK (131 aa). Residues H8, K12, 34–37, and 54–55 contribute to the substrate site; these read TGTT and SG. The active-site Proton donor/acceptor is D60. Position 87 (H87) interacts with substrate.

Belongs to the methylglyoxal synthase family.

It catalyses the reaction dihydroxyacetone phosphate = methylglyoxal + phosphate. Catalyzes the formation of methylglyoxal from dihydroxyacetone phosphate. The protein is Methylglyoxal synthase of Bacillus cytotoxicus (strain DSM 22905 / CIP 110041 / 391-98 / NVH 391-98).